The primary structure comprises 547 residues: Chaperonin GroEL (547 aa).

ATP is bound by residues 30–33, Lys51, 87–91, Gly415, 479–481, and Asp495; these read TLGP, DGTTT, and DAA.

It belongs to the chaperonin (HSP60) family. In terms of assembly, forms a cylinder of 14 subunits composed of two heptameric rings stacked back-to-back. Interacts with the co-chaperonin GroES.

The protein localises to the cytoplasm. It carries out the reaction ATP + H2O + a folded polypeptide = ADP + phosphate + an unfolded polypeptide.. Together with its co-chaperonin GroES, plays an essential role in assisting protein folding. The GroEL-GroES system forms a nano-cage that allows encapsulation of the non-native substrate proteins and provides a physical environment optimized to promote and accelerate protein folding. This is Chaperonin GroEL from Dichelobacter nodosus (strain VCS1703A).